We begin with the raw amino-acid sequence, 333 residues long: Adenosine deaminase (333 aa).

2 residues coordinate Zn(2+): His-12 and His-14. Substrate is bound by residues His-14, Asp-16, and Gly-170. His-197 lines the Zn(2+) pocket. Catalysis depends on Glu-200, which acts as the Proton donor. Asp-278 serves as a coordination point for Zn(2+). A substrate-binding site is contributed by Asp-279.

The protein belongs to the metallo-dependent hydrolases superfamily. Adenosine and AMP deaminases family. Adenosine deaminase subfamily. Requires Zn(2+) as cofactor.

It carries out the reaction adenosine + H2O + H(+) = inosine + NH4(+). The catalysed reaction is 2'-deoxyadenosine + H2O + H(+) = 2'-deoxyinosine + NH4(+). Functionally, catalyzes the hydrolytic deamination of adenosine and 2-deoxyadenosine. The chain is Adenosine deaminase from Shigella dysenteriae serotype 1 (strain Sd197).